Here is a 446-residue protein sequence, read N- to C-terminus: Putative ankyrin repeat protein L273 (446 aa).

6 ANK repeats span residues 71–100 (NGEF…KSNM), 124–153 (DHNK…RMRP), 206–237 (TDIE…KILM), 245–277 (VWVS…KMHV), 303–332 (ELEY…NSYY), and 365–394 (YTDI…QQII).

This chain is Putative ankyrin repeat protein L273, found in Acanthamoeba polyphaga (Amoeba).